Reading from the N-terminus, the 116-residue chain is Protein Wnt-5a (116 aa).

S1 is lipidated: O-palmitoleoyl serine; by PORCN. N69 and N83 each carry an N-linked (GlcNAc...) asparagine glycan. The cysteines at positions 82 and 97 are disulfide-linked.

It belongs to the Wnt family. Post-translationally, palmitoleoylation is required for efficient binding to frizzled receptors. Depalmitoleoylation leads to Wnt signaling pathway inhibition.

The protein localises to the secreted. Its subcellular location is the extracellular space. It is found in the extracellular matrix. Functionally, ligand for members of the frizzled family of seven transmembrane receptors. Can activate or inhibit canonical Wnt signaling, depending on receptor context. Required during embryogenesis for extension of the primary anterior-posterior axis. In Alopias vulpinus (Common thresher shark), this protein is Protein Wnt-5a (WNT-5A).